The following is a 485-amino-acid chain: Membrane-bound lytic murein transglycosylase F (485 aa).

Residues 1–29 (MFAHTALRQRCAKWLFATGLFLLLGACVE) form the signal peptide. The tract at residues 30–267 (KPSTLERVKE…RLKDRYYGHV (238 aa)) is non-LT domain. Residues 268 to 485 (DVLGYVGAYT…DKPADQSPPM (218 aa)) form an LT domain region. Glutamate 314 is an active-site residue. The interval 465 to 485 (EGNLHVPGVNKDKPADQSPPM) is disordered.

The protein in the N-terminal section; belongs to the bacterial solute-binding protein 3 family. In the C-terminal section; belongs to the transglycosylase Slt family.

Its subcellular location is the cell outer membrane. The catalysed reaction is Exolytic cleavage of the (1-&gt;4)-beta-glycosidic linkage between N-acetylmuramic acid (MurNAc) and N-acetylglucosamine (GlcNAc) residues in peptidoglycan, from either the reducing or the non-reducing ends of the peptidoglycan chains, with concomitant formation of a 1,6-anhydrobond in the MurNAc residue.. Its function is as follows. Murein-degrading enzyme that degrades murein glycan strands and insoluble, high-molecular weight murein sacculi, with the concomitant formation of a 1,6-anhydromuramoyl product. Lytic transglycosylases (LTs) play an integral role in the metabolism of the peptidoglycan (PG) sacculus. Their lytic action creates space within the PG sacculus to allow for its expansion as well as for the insertion of various structures such as secretion systems and flagella. The sequence is that of Membrane-bound lytic murein transglycosylase F from Pseudomonas putida (strain GB-1).